The chain runs to 183 residues: Putative 3-methyladenine DNA glycosylase (183 aa).

It belongs to the DNA glycosylase MPG family.

This Rickettsia peacockii (strain Rustic) protein is Putative 3-methyladenine DNA glycosylase.